The primary structure comprises 316 residues: Ribose-phosphate pyrophosphokinase (316 aa).

ATP-binding positions include 42-44 and 101-102; these read DGE and RQ. Mg(2+) is bound by residues His135 and Asp174. The active site involves Lys197. D-ribose 5-phosphate-binding positions include Arg199, Asp223, and 227–231; that span reads DTAGT.

The protein belongs to the ribose-phosphate pyrophosphokinase family. Class I subfamily. In terms of assembly, homohexamer. It depends on Mg(2+) as a cofactor.

The protein localises to the cytoplasm. It catalyses the reaction D-ribose 5-phosphate + ATP = 5-phospho-alpha-D-ribose 1-diphosphate + AMP + H(+). It functions in the pathway metabolic intermediate biosynthesis; 5-phospho-alpha-D-ribose 1-diphosphate biosynthesis; 5-phospho-alpha-D-ribose 1-diphosphate from D-ribose 5-phosphate (route I): step 1/1. Functionally, involved in the biosynthesis of the central metabolite phospho-alpha-D-ribosyl-1-pyrophosphate (PRPP) via the transfer of pyrophosphoryl group from ATP to 1-hydroxyl of ribose-5-phosphate (Rib-5-P). This chain is Ribose-phosphate pyrophosphokinase, found in Halalkalibacterium halodurans (strain ATCC BAA-125 / DSM 18197 / FERM 7344 / JCM 9153 / C-125) (Bacillus halodurans).